The sequence spans 443 residues: Phosphoglucosamine mutase (443 aa).

The active-site Phosphoserine intermediate is the Ser100. Mg(2+)-binding residues include Ser100, Asp240, Asp242, and Asp244. Position 100 is a phosphoserine (Ser100).

The protein belongs to the phosphohexose mutase family. Requires Mg(2+) as cofactor. Activated by phosphorylation.

The enzyme catalyses alpha-D-glucosamine 1-phosphate = D-glucosamine 6-phosphate. Functionally, catalyzes the conversion of glucosamine-6-phosphate to glucosamine-1-phosphate. This is Phosphoglucosamine mutase from Carboxydothermus hydrogenoformans (strain ATCC BAA-161 / DSM 6008 / Z-2901).